Consider the following 151-residue polypeptide: UPF0756 membrane protein HSM_1471 (151 aa).

4 helical membrane passes run 1-21 (MSLQ…LGVL), 52-72 (YGVN…IVSG), 81-101 (ALIH…AWFG), and 123-143 (ILGV…AGIL).

It belongs to the UPF0756 family.

Its subcellular location is the cell membrane. The polypeptide is UPF0756 membrane protein HSM_1471 (Histophilus somni (strain 2336) (Haemophilus somnus)).